The sequence spans 210 residues: Orotate phosphoribosyltransferase (210 aa).

5-phospho-alpha-D-ribose 1-diphosphate is bound by residues R94, K98, H100, and 120 to 128 (EDLISTGGS). An orotate-binding site is contributed by S124.

This sequence belongs to the purine/pyrimidine phosphoribosyltransferase family. PyrE subfamily. As to quaternary structure, homodimer. The cofactor is Mg(2+).

The catalysed reaction is orotidine 5'-phosphate + diphosphate = orotate + 5-phospho-alpha-D-ribose 1-diphosphate. It functions in the pathway pyrimidine metabolism; UMP biosynthesis via de novo pathway; UMP from orotate: step 1/2. Functionally, catalyzes the transfer of a ribosyl phosphate group from 5-phosphoribose 1-diphosphate to orotate, leading to the formation of orotidine monophosphate (OMP). The protein is Orotate phosphoribosyltransferase of Bacillus cytotoxicus (strain DSM 22905 / CIP 110041 / 391-98 / NVH 391-98).